The chain runs to 483 residues: Glutamate--tRNA ligase (483 aa).

Positions 14–24 (PSPTGDPHVGT) match the 'HIGH' region motif. Residues 253–257 (KISKR) carry the 'KMSKS' region motif. Residue K256 coordinates ATP.

Belongs to the class-I aminoacyl-tRNA synthetase family. Glutamate--tRNA ligase type 1 subfamily. In terms of assembly, monomer.

Its subcellular location is the cytoplasm. It carries out the reaction tRNA(Glu) + L-glutamate + ATP = L-glutamyl-tRNA(Glu) + AMP + diphosphate. Its function is as follows. Catalyzes the attachment of glutamate to tRNA(Glu) in a two-step reaction: glutamate is first activated by ATP to form Glu-AMP and then transferred to the acceptor end of tRNA(Glu). The polypeptide is Glutamate--tRNA ligase (Deinococcus radiodurans (strain ATCC 13939 / DSM 20539 / JCM 16871 / CCUG 27074 / LMG 4051 / NBRC 15346 / NCIMB 9279 / VKM B-1422 / R1)).